Here is a 320-residue protein sequence, read N- to C-terminus: Cytochrome f (320 aa).

The signal sequence occupies residues 1–35 (MHTKNLFYSRTQQITQYLSALLMMVILTRTSISSA). Heme-binding residues include Tyr-36, Cys-56, Cys-59, and His-60. Residues 286–306 (VQVLLFFFASIILAQIFLVLK) form a helical membrane-spanning segment.

The protein belongs to the cytochrome f family. The 4 large subunits of the cytochrome b6-f complex are cytochrome b6, subunit IV (17 kDa polypeptide, petD), cytochrome f and the Rieske protein, while the 4 small subunits are PetG, PetL, PetM and PetN. The complex functions as a dimer. Heme serves as cofactor.

Its subcellular location is the plastid thylakoid membrane. Functionally, component of the cytochrome b6-f complex, which mediates electron transfer between photosystem II (PSII) and photosystem I (PSI), cyclic electron flow around PSI, and state transitions. The chain is Cytochrome f from Cuscuta gronovii (Common dodder).